We begin with the raw amino-acid sequence, 379 residues long: Junctional adhesion molecule-like (379 aa).

A signal peptide spans Met1–Pro20. The Extracellular segment spans residues Gln21–Leu281. Ig-like V-type domains lie at Pro24 to Glu135 and Pro140 to Val250. A disulfide bridge connects residues Cys45 and Cys119. Residues Asn79, Asn89, and Asn125 are each glycosylated (N-linked (GlcNAc...) asparagine). Cys158 and Cys236 are oxidised to a cystine. Residues Val282–Val302 form a helical membrane-spanning segment. Over Lys303 to Lys379 the chain is Cytoplasmic. Tyr355 is modified (phosphotyrosine).

Belongs to the immunoglobulin superfamily. As to quaternary structure, homodimer; active form in leukocyte-endothelial cell adhesion. Interacts (homodimeric form) with CXADR. Interacts (via cytoplasmic domain) with the PI3 kinase; upon CXADR-binding. Interacts with ITGA4 and ITGB1; integrin alpha-4/beta-1 may regulate leukocyte to endothelial cells adhesion by controlling JAML homodimerization. In terms of tissue distribution, expressed by gamma-delta intraepithelial T cells (at protein level).

Its subcellular location is the cell membrane. The protein localises to the cell junction. In terms of biological role, transmembrane protein of the plasma membrane of leukocytes that control their migration and activation through interaction with CXADR, a plasma membrane receptor found on adjacent epithelial and endothelial cells. The interaction between both receptors mediates the activation of gamma-delta T-cells, a subpopulation of T-cells residing in epithelia and involved in tissue homeostasis and repair. Upon epithelial CXADR-binding, JAML induces downstream cell signaling events in gamma-delta T-cells through PI3-kinase and MAP kinases. It results in proliferation and production of cytokines and growth factors by T-cells that in turn stimulate epithelial tissues repair. It also controls the transmigration of leukocytes within epithelial and endothelial tissues through adhesive interactions with epithelial and endothelial CXADR. This is Junctional adhesion molecule-like from Mus musculus (Mouse).